The primary structure comprises 308 residues: tRNA-cytidine(32) 2-sulfurtransferase (308 aa).

The PP-loop motif motif lies at 39-44; the sequence is SGGKDS. 3 residues coordinate [4Fe-4S] cluster: Cys-114, Cys-117, and Cys-205.

The protein belongs to the TtcA family. As to quaternary structure, homodimer. Mg(2+) is required as a cofactor. Requires [4Fe-4S] cluster as cofactor.

The protein resides in the cytoplasm. The catalysed reaction is cytidine(32) in tRNA + S-sulfanyl-L-cysteinyl-[cysteine desulfurase] + AH2 + ATP = 2-thiocytidine(32) in tRNA + L-cysteinyl-[cysteine desulfurase] + A + AMP + diphosphate + H(+). Its pathway is tRNA modification. Catalyzes the ATP-dependent 2-thiolation of cytidine in position 32 of tRNA, to form 2-thiocytidine (s(2)C32). The sulfur atoms are provided by the cysteine/cysteine desulfurase (IscS) system. This chain is tRNA-cytidine(32) 2-sulfurtransferase, found in Cupriavidus taiwanensis (strain DSM 17343 / BCRC 17206 / CCUG 44338 / CIP 107171 / LMG 19424 / R1) (Ralstonia taiwanensis (strain LMG 19424)).